The following is a 299-amino-acid chain: Inactive recombination-promoting nuclease-like protein RpnE (299 aa).

The protein belongs to the Rpn/YhgA-like nuclease family.

Its function is as follows. Upon expression has no effect on RecA-independent DNA recombination, cell viability or DNA damage. The protein is Inactive recombination-promoting nuclease-like protein RpnE (yfaD) of Escherichia coli (strain K12).